The following is an 883-amino-acid chain: Alanine--tRNA ligase (883 aa).

Residues H563, H567, C677, and H681 each coordinate Zn(2+).

Belongs to the class-II aminoacyl-tRNA synthetase family. It depends on Zn(2+) as a cofactor.

The protein resides in the cytoplasm. It catalyses the reaction tRNA(Ala) + L-alanine + ATP = L-alanyl-tRNA(Ala) + AMP + diphosphate. Functionally, catalyzes the attachment of alanine to tRNA(Ala) in a two-step reaction: alanine is first activated by ATP to form Ala-AMP and then transferred to the acceptor end of tRNA(Ala). Also edits incorrectly charged Ser-tRNA(Ala) and Gly-tRNA(Ala) via its editing domain. The polypeptide is Alanine--tRNA ligase (Cereibacter sphaeroides (strain ATCC 17025 / ATH 2.4.3) (Rhodobacter sphaeroides)).